Here is a 321-residue protein sequence, read N- to C-terminus: MPLLPVALISSMLYFQMVIMAGTVMLAYYFEYTDTFTVNVQGFFCHDSAYRKPYPGPEDSSAVPPVLLYSLAAGVPVLVIIVGETAVFCLQLATRDFENQEKTILTGDCCYINPLVRRTVRFLGIYAFGLFATDIFVNAGQVVTGNLAPHFLALCKPNYTALGCQQYTQFISGEEACTGNPDLIMRARKTFPSKEAALSVYAATYLTMYITSTIKAKGTRLAKPVLCLGLMCLAFLTGLNRVAEYRNHWSDVIAGFLVGISIAVFLVVCVVNNFKGRQPENGHIHRDNVARMPMTNIPRVESPLEKVTSLQNHVTAFAEVT.

The next 6 membrane-spanning stretches (helical) occupy residues 6–26, 62–82, 122–142, 196–213, 225–245, and 252–272; these read VALI…TVML, AVPP…VIIV, FLGI…AGQV, AALS…ITST, VLCL…VAEY, and VIAG…CVVN.

This sequence belongs to the PA-phosphatase related phosphoesterase family.

It localises to the cell membrane. Functionally, induces filopodia formation and promotes neurite growth in a CDC42-independent manner; impedes neurite growth inhibitory-mediated axonal retraction. The polypeptide is Phospholipid phosphatase-related protein type 5 (Mus musculus (Mouse)).